Reading from the N-terminus, the 142-residue chain is 2-aminomuconate deaminase (142 aa).

Belongs to the 2-aminomuconate deaminase family. Homotetramer.

It catalyses the reaction (2Z,4E)-2-aminomuconate + H2O = (3E)-2-oxohex-3-enedioate + NH4(+). Its activity is regulated as follows. Slightly inhibited by Pb(2+), Hg(+) and Cu(2+). In terms of biological role, involved in the modified meta-cleavage pathway for the 2-aminophenol catabolism. Only active toward 2-aminomuconic acid. The polypeptide is 2-aminomuconate deaminase (amnD) (Pseudomonas sp).